Reading from the N-terminus, the 605-residue chain is UvrABC system protein C (605 aa).

The region spanning 14 to 92 (QSCGVYKMIG…IKSLKPSYNI (79 aa)) is the GIY-YIG domain. A UVR domain is found at 202–237 (KEVQRQLFSTMEKCSREMNYELAAVYRDRLKFLQQI).

This sequence belongs to the UvrC family. Interacts with UvrB in an incision complex.

The protein localises to the cytoplasm. Functionally, the UvrABC repair system catalyzes the recognition and processing of DNA lesions. UvrC both incises the 5' and 3' sides of the lesion. The N-terminal half is responsible for the 3' incision and the C-terminal half is responsible for the 5' incision. The sequence is that of UvrABC system protein C from Wolbachia pipientis subsp. Culex pipiens (strain wPip).